The chain runs to 279 residues: Probable endonuclease 4 (279 aa).

Residues His-69, His-109, Glu-145, Asp-179, His-182, His-216, Asp-229, His-231, and Glu-261 each coordinate Zn(2+).

It belongs to the AP endonuclease 2 family. The cofactor is Zn(2+).

The catalysed reaction is Endonucleolytic cleavage to 5'-phosphooligonucleotide end-products.. In terms of biological role, endonuclease IV plays a role in DNA repair. It cleaves phosphodiester bonds at apurinic or apyrimidinic (AP) sites, generating a 3'-hydroxyl group and a 5'-terminal sugar phosphate. This is Probable endonuclease 4 from Desulforapulum autotrophicum (strain ATCC 43914 / DSM 3382 / VKM B-1955 / HRM2) (Desulfobacterium autotrophicum).